The primary structure comprises 317 residues: Transaldolase (317 aa).

K132 acts as the Schiff-base intermediate with substrate in catalysis.

The protein belongs to the transaldolase family. Type 1 subfamily. As to quaternary structure, homodimer.

It is found in the cytoplasm. The catalysed reaction is D-sedoheptulose 7-phosphate + D-glyceraldehyde 3-phosphate = D-erythrose 4-phosphate + beta-D-fructose 6-phosphate. Its pathway is carbohydrate degradation; pentose phosphate pathway; D-glyceraldehyde 3-phosphate and beta-D-fructose 6-phosphate from D-ribose 5-phosphate and D-xylulose 5-phosphate (non-oxidative stage): step 2/3. In terms of biological role, transaldolase is important for the balance of metabolites in the pentose-phosphate pathway. The chain is Transaldolase from Mannheimia succiniciproducens (strain KCTC 0769BP / MBEL55E).